We begin with the raw amino-acid sequence, 109 residues long: B melanoma antigen 2 (109 aa).

Residues 1 to 17 form the signal peptide; sequence MAAGVVFLALSAQLLQA.

Belongs to the BAGE family. As to expression, not expressed in normal tissues except in testis. Expressed in 22% of melanomas, in bladder and lung carcinomas.

The protein resides in the secreted. In terms of biological role, unknown. Candidate gene encoding tumor antigens. The protein is B melanoma antigen 2 (BAGE2) of Homo sapiens (Human).